The primary structure comprises 430 residues: MASSTIISRKMIKLLSPTPSSLRCHKLSFMDHINFPLHSPYAFFYPKIPQNYSNKISQVLENSLSKVLSFYYPLAGKINNNYTYVDCNDTGAEYLNVRIDCPMSQILNHPYNDVVDVVFPQDLPWSSSSLTRSPLVVQLSHFDCGGVAVSACTSHTIFDGYCLSKFINDWASTARNMEFKPSPQFNASTFFPLPSETNLSSTLPATRPSQRHVSRMYNFSSSNLTRLKDIVTKESHVKNPTRVEVASALVHKCGVTMSMESSGMFKPTLMSHAMNLRPPIPLNTMGNATCIILTTAMTEDEVKLPNFVAKLQKDKQQLRDKLKDMKEDRMPLYTLELGKNAMNIIEKDTHDVYLCSGMTNTGLHKIDFGWGEPVRVTLATHPNKNNFIFMDEQSGDGLNVLITLTKDDMLKFQSNKELLEFASPVVESTK.

Active-site proton acceptor residues include His-155 and Asp-367.

It belongs to the plant acyltransferase family. As to quaternary structure, monomer. As to expression, expressed in tip cells of type I trichomes of stems and petioles, sites of acylsugars production.

Functionally, catalyzes the transfer of short (four to five carbons) branched acyl chains to the furanose ring of di-acylsucrose acceptors to produce tri-acylsucroses such as S3:15 (5,5,5), S4:17 (2,5,5,5) and S4:24 (2,5,5,12) acylsucroses. This Solanum lycopersicum (Tomato) protein is Acylsugar acyltransferase 3.